Here is a 103-residue protein sequence, read N- to C-terminus: Sperm-associated antigen 11B (103 aa).

The N-terminal stretch at 1–25 (MRQRLLPSVTSLLLVALLFPGSSQA) is a signal peptide. N29 is a glycosylation site (N-linked (GlcNAc...) asparagine).

It belongs to the SPAG11 family. Specifically expressed in caput and proximal corpus of epididymis (at protein level). Present in the epididymal epithelium and on the sperm surface, with a subacrosomal equatorial distribution on the sperm head (at protein level).

It is found in the secreted. Has antimicrobial activity against E.coli. Plays a role in the defense response in the male reproductive tract, contributing to sperm maturation, storage and protection. The sequence is that of Sperm-associated antigen 11B from Homo sapiens (Human).